The chain runs to 672 residues: Beta-galactosidase BgaB (672 aa).

R109 lines the substrate pocket. C113 serves as a coordination point for Zn(2+). N147 contributes to the substrate binding site. The active-site Proton donor is E148. The Zn(2+) site is built by C156, C158, and C161. Residue E303 is the Nucleophile of the active site. Substrate is bound by residues W311 and 351–354 (EKFH).

Belongs to the glycosyl hydrolase 42 family.

The enzyme catalyses Hydrolysis of terminal non-reducing beta-D-galactose residues in beta-D-galactosides.. This chain is Beta-galactosidase BgaB, found in Geobacillus sp. (strain Y412MC61).